The chain runs to 312 residues: Olfactory receptor 10D3 (312 aa).

The Extracellular segment spans residues 1–26 (MEVKNCCMVTEFILLGIPHTEGLEMT). The chain crosses the membrane as a helical span at residues 27 to 47 (LFVLFLPFYACTLLGNVSILV). Residues 48–57 (AVMSSARLHT) are Cytoplasmic-facing. Residues 58 to 78 (PMYFFLGNLSVFDMGFSSVTC) form a helical membrane-spanning segment. The Extracellular segment spans residues 79-97 (PKMLLYLMGLSRLISYKDC). Cysteine 97 and cysteine 179 are disulfide-bonded. A helical membrane pass occupies residues 98-118 (VCQLFFFHFLGSIECFLFTVM). Residues 119-139 (AYDRFTAICYPLRYTVIMNPR) lie on the Cytoplasmic side of the membrane. Residues 140-160 (ICVALAVGTWLLGCIHSSILT) form a helical membrane-spanning segment. At 161–197 (SLTFTLPYCGPNEVDHFFCDIPALLPLACADTSLAQR) the chain is on the extracellular side. The chain crosses the membrane as a helical span at residues 198–218 (VSFTNVGLISLVCFLLILLSY). The Cytoplasmic portion of the chain corresponds to 219-239 (TRITISILSIRTTEGRRRAFS). Residues 240-260 (TCSAHLIAILCAYGPIITVYL) form a helical membrane-spanning segment. Residues 261-266 (QPTPNP) lie on the Extracellular side of the membrane. Residues 267–287 (MLGTVVQILMNLVGPMLNPLI) form a helical membrane-spanning segment. The Cytoplasmic segment spans residues 288-312 (YTLRNKEVKTALKTILHRTGHVPES).

It belongs to the G-protein coupled receptor 1 family.

It localises to the cell membrane. Odorant receptor. This chain is Olfactory receptor 10D3, found in Homo sapiens (Human).